The following is a 348-amino-acid chain: UDP-3-O-acylglucosamine N-acyltransferase (348 aa).

The active-site Proton acceptor is the histidine 241.

The protein belongs to the transferase hexapeptide repeat family. LpxD subfamily. Homotrimer.

The catalysed reaction is a UDP-3-O-[(3R)-3-hydroxyacyl]-alpha-D-glucosamine + a (3R)-hydroxyacyl-[ACP] = a UDP-2-N,3-O-bis[(3R)-3-hydroxyacyl]-alpha-D-glucosamine + holo-[ACP] + H(+). It participates in bacterial outer membrane biogenesis; LPS lipid A biosynthesis. Its function is as follows. Catalyzes the N-acylation of UDP-3-O-acylglucosamine using 3-hydroxyacyl-ACP as the acyl donor. Is involved in the biosynthesis of lipid A, a phosphorylated glycolipid that anchors the lipopolysaccharide to the outer membrane of the cell. The chain is UDP-3-O-acylglucosamine N-acyltransferase from Neisseria meningitidis serogroup C (strain 053442).